The primary structure comprises 294 residues: tRNA dimethylallyltransferase (294 aa).

Position 10–17 (10–17) interacts with ATP; the sequence is GPTAVGKT. 12 to 17 is a binding site for substrate; sequence TAVGKT. The tract at residues 35-38 is interaction with substrate tRNA; sequence DSQQ.

This sequence belongs to the IPP transferase family. As to quaternary structure, monomer. Requires Mg(2+) as cofactor.

It carries out the reaction adenosine(37) in tRNA + dimethylallyl diphosphate = N(6)-dimethylallyladenosine(37) in tRNA + diphosphate. In terms of biological role, catalyzes the transfer of a dimethylallyl group onto the adenine at position 37 in tRNAs that read codons beginning with uridine, leading to the formation of N6-(dimethylallyl)adenosine (i(6)A). The polypeptide is tRNA dimethylallyltransferase (Streptococcus pneumoniae serotype 2 (strain D39 / NCTC 7466)).